A 360-amino-acid polypeptide reads, in one-letter code: Alpha-ketoglutarate dependent kainoid synthase (360 aa).

The 111-residue stretch at 200-310 (MFFSNRIYPE…RASLISFYEP (111 aa)) folds into the Fe2OG dioxygenase domain. The Fe cation site is built by H225, D227, and H286. R301 lines the 2-oxoglutarate pocket.

The protein belongs to the iron/ascorbate-dependent oxidoreductase family. The cofactor is Fe(2+).

It catalyses the reaction prekainate + 2-oxoglutarate + O2 = kainate + succinate + CO2 + H2O. The enzyme catalyses prekainate + 2-oxoglutarate + O2 + H(+) = kainate lactone + succinate + CO2 + H2O. It functions in the pathway secondary metabolite biosynthesis. With respect to regulation, inhibited by the iron chelator EDTA. Functionally, iron/ascorbate-dependent oxidoreductase: part of the gene cluster that mediates the biosynthesis of kainic acid (KA) and derivatives, natural products with neurochemical activity acting as ionotropic glutamate receptor (iGluR) agonists, thus being neurotoxins. Catalyzes the conversion of prekainic acid to kainic acid and kainic acid lactone. This Digenea simplex (Marine red alga) protein is Alpha-ketoglutarate dependent kainoid synthase.